We begin with the raw amino-acid sequence, 513 residues long: Membrane protein (513 aa).

Repeat copies occupy residues 9–11 (PSA), 12–14 (PSA), 15–17 (PSA), and 18–20 (PSA). The segment at 9-20 (PSAPSAPSAPSA) is 4 X 3 AA tandem repeats of P-S-A. 14 helical membrane-spanning segments follow: residues 32–52 (LTLH…LAIP), 56–76 (GLTV…VVWI), 79–99 (AVSY…LIGF), 126–146 (TALA…VTGL), 165–185 (ILIG…SATA), 208–228 (NIAA…NVGI), 254–274 (QWLI…YFLV), 309–329 (LAAV…LHSF), 332–352 (ATVT…VMDW), 360–380 (PWGT…LLST), 400–420 (GALL…LGFA), 422–442 (ATAL…TLPG), 447–467 (VGMT…PINA), and 487–507 (IGIP…ATYW).

The protein belongs to the SLC13A/DASS transporter (TC 2.A.47) family. DIT1 subfamily.

It localises to the cell membrane. This chain is Membrane protein, found in Cupriavidus necator (strain ATCC 17699 / DSM 428 / KCTC 22496 / NCIMB 10442 / H16 / Stanier 337) (Ralstonia eutropha).